A 295-amino-acid polypeptide reads, in one-letter code: MNLRRRGIVVSFHSNMVTVEDEETGERILCKLRGKFRLQNLKIYVGDRVEYTPDETGSGVIENVLHRKNLLTKPHVANVDQVILVVTVKMPETSTYIIDKFLVLAEKNELETVMVINKMDLYDEDDLRKVRELEEIYSGLYPIVKTSAKTGMGIEELKEYLKGKISTMAGLSGVGKSSLLNAINPGLKLRVSEVSEKLQRGRHTTTTAQLLKFDFGGYVVDTPGFANLEINDIEPEELKHYFKEFGDKQCFFSDCNHVDEPECGVKEAVENGEIAESRYENYVKMFYELLGRRKK.

Residues 68–228 form the CP-type G domain; it reads KNLLTKPHVA…VVDTPGFANL (161 aa). Residues 117–120 and 170–178 contribute to the GTP site; these read NKMD and GLSGVGKSS. Residues cysteine 250, cysteine 255, histidine 257, and cysteine 263 each coordinate Zn(2+).

The protein belongs to the TRAFAC class YlqF/YawG GTPase family. RsgA subfamily. In terms of assembly, monomer. Associates with 30S ribosomal subunit, binds 16S rRNA. Zn(2+) is required as a cofactor.

It localises to the cytoplasm. One of several proteins that assist in the late maturation steps of the functional core of the 30S ribosomal subunit. Helps release RbfA from mature subunits. May play a role in the assembly of ribosomal proteins into the subunit. Circularly permuted GTPase that catalyzes slow GTP hydrolysis, GTPase activity is stimulated by the 30S ribosomal subunit. This chain is Small ribosomal subunit biogenesis GTPase RsgA, found in Thermotoga maritima (strain ATCC 43589 / DSM 3109 / JCM 10099 / NBRC 100826 / MSB8).